Here is a 541-residue protein sequence, read N- to C-terminus: Acyl-CoA ligase M9 (541 aa).

An AMP-binding site is contributed by 186-197; sequence AMSTSGTTGLPK. Residues 445–519 are AMP-binding; it reads ELEAVLHQMP…DSLPRNSSGK (75 aa).

The protein belongs to the ATP-dependent AMP-binding enzyme family.

Its pathway is secondary metabolite biosynthesis. In terms of biological role, acyl-CoA ligase; part of the gene cluster that mediates the biosynthesis of squalestatin S1 (SQS1, also known as zaragozic acid A), a heavily oxidized fungal polyketide that offers potent cholesterol lowering activity by targeting squalene synthase (SS). SQS1 is composed of a 2,8-dioxobicyclic[3.2.1]octane-3,4,5-tricarboxyclic acid core that is connected to two lipophilic polyketide arms. These initial steps feature the priming of an unusual benzoic acid starter unit onto the highly reducing polyketide synthase pks2, followed by oxaloacetate extension and product release to generate a tricarboxylic acid containing product. The phenylalanine ammonia lyase (PAL) M7 and the acyl-CoA ligase M9 are involved in transforming phenylalanine into benzoyl-CoA. The citrate synthase-like protein R3 is involved in connecting the C-alpha-carbons of the hexaketide chain and oxaloacetate to afford the tricarboxylic acid unit. The potential hydrolytic enzymes, M8 and M10, are in close proximity to pks2 and may participate in product release. On the other side, the tetraketide arm is synthesized by a the squalestatin tetraketide synthase pks1 and enzymatically esterified to the core in the last biosynthetic step, by the acetyltransferase M4. The biosynthesis of the tetraketide must involve 3 rounds of chain extension. After the first and second rounds methyl-transfer occurs, and in all rounds of extension the ketoreductase and dehydratase are active. The enoyl reductase and C-MeT of pks1 are not active in the final round of extension. The acetyltransferase M4 appears to have a broad substrate selectivity for its acyl CoA substrate, allowing the in vitro synthesis of novel squalestatins. The biosynthesis of SQS1 requires several oxidative steps likely performed by oxidoreductases M1, R1 and R2. Finally, in support of the identification of the cluster as being responsible for SQS1 production, the cluster contains a gene encoding a putative squalene synthase (SS) R6, suggesting a likely mechanism for self-resistance. In Phoma sp. (strain ATCC 20986 / MF5453), this protein is Acyl-CoA ligase M9.